We begin with the raw amino-acid sequence, 632 residues long: ATP-dependent RNA helicase mrh4, mitochondrial (632 aa).

The N-terminal 37 residues, 1-37 (MNRLGRMSLPLRSPACLICQTRTTTLIPSSWQTARSM), are a transit peptide targeting the mitochondrion. The disordered stretch occupies residues 49–111 (MALSPDVAKP…KEEAQKKESP (63 aa)). The span at 97 to 111 (RSGDSKEEAQKKESP) shows a compositional bias: basic and acidic residues. The Q motif motif lies at 141–174 (TSFDQFPLLPVVRNSIVSQALPGLMEVTPTPIQR). The Helicase ATP-binding domain occupies 194-406 (DDDEPHYDQF…RKRYPDIKRL (213 aa)). Residue 207-214 (AETGSGKT) participates in ATP binding. Positions 353–356 (DEAD) match the DEAD box motif. The 173-residue stretch at 460–632 (FLEPKTKKIL…EGMFRGQALI (173 aa)) folds into the Helicase C-terminal domain.

The protein belongs to the DEAD box helicase family. MRH4 subfamily.

Its subcellular location is the mitochondrion. The enzyme catalyses ATP + H2O = ADP + phosphate + H(+). Its function is as follows. ATP-binding RNA helicase involved in mitochondrial RNA metabolism. Required for maintenance of mitochondrial DNA. In Aspergillus clavatus (strain ATCC 1007 / CBS 513.65 / DSM 816 / NCTC 3887 / NRRL 1 / QM 1276 / 107), this protein is ATP-dependent RNA helicase mrh4, mitochondrial (mrh4).